The sequence spans 354 residues: Uroporphyrinogen decarboxylase (354 aa).

Residues 27–31 (RQAGR), D77, Y154, T209, and H327 each bind substrate.

Belongs to the uroporphyrinogen decarboxylase family. In terms of assembly, homodimer.

The protein resides in the cytoplasm. It carries out the reaction uroporphyrinogen III + 4 H(+) = coproporphyrinogen III + 4 CO2. Its pathway is porphyrin-containing compound metabolism; protoporphyrin-IX biosynthesis; coproporphyrinogen-III from 5-aminolevulinate: step 4/4. Catalyzes the decarboxylation of four acetate groups of uroporphyrinogen-III to yield coproporphyrinogen-III. The polypeptide is Uroporphyrinogen decarboxylase (Salmonella paratyphi A (strain ATCC 9150 / SARB42)).